Consider the following 156-residue polypeptide: Ribosomal RNA large subunit methyltransferase H (156 aa).

S-adenosyl-L-methionine-binding positions include Leu73, Gly104, and 123-128 (LSALTL).

It belongs to the RNA methyltransferase RlmH family. In terms of assembly, homodimer.

Its subcellular location is the cytoplasm. It carries out the reaction pseudouridine(1915) in 23S rRNA + S-adenosyl-L-methionine = N(3)-methylpseudouridine(1915) in 23S rRNA + S-adenosyl-L-homocysteine + H(+). Specifically methylates the pseudouridine at position 1915 (m3Psi1915) in 23S rRNA. The polypeptide is Ribosomal RNA large subunit methyltransferase H (Psychromonas ingrahamii (strain DSM 17664 / CCUG 51855 / 37)).